Consider the following 446-residue polypeptide: Cobalamin biosynthesis protein CbiHC (446 aa).

The interval 1-246 (MLLLPSRGKL…MFTPRGYSNK (246 aa)) is cobalt-factor III C(17)-methyltransferase. Residues 247 to 446 (YNIGEKRRAE…CLIEHADRPD (200 aa)) are cobalt-precorrin-8 methylmutase.

This sequence in the N-terminal section; belongs to the precorrin methyltransferase family. It in the C-terminal section; belongs to the CobH family.

The enzyme catalyses Co(II)-factor III + S-adenosyl-L-methionine + H(+) = Co(II)-factor IV + S-adenosyl-L-homocysteine. It carries out the reaction Co-precorrin-8X = cob(II)yrinate. It participates in cofactor biosynthesis; adenosylcobalamin biosynthesis; cob(II)yrinate a,c-diamide from sirohydrochlorin (anaerobic route): step 3/10. Its pathway is cofactor biosynthesis; adenosylcobalamin biosynthesis; cob(II)yrinate a,c-diamide from sirohydrochlorin (anaerobic route): step 9/10. In terms of biological role, bifunctional enzyme with a methyltransferase domain that catalyzes the ring contraction and methylation of C-17 in cobalt-factor III to form cobalt-factor IV, and an isomerase domain that catalyzes the conversion of cobalt-precorrin-8 to cobyrinate. The chain is Cobalamin biosynthesis protein CbiHC (cbiHC) from Archaeoglobus fulgidus (strain ATCC 49558 / DSM 4304 / JCM 9628 / NBRC 100126 / VC-16).